The chain runs to 172 residues: NADH-quinone oxidoreductase subunit B (172 aa).

[4Fe-4S] cluster-binding residues include C46, C47, C111, and C141.

It belongs to the complex I 20 kDa subunit family. NDH-1 is composed of 14 different subunits. Subunits NuoB, C, D, E, F, and G constitute the peripheral sector of the complex. The cofactor is [4Fe-4S] cluster.

Its subcellular location is the cell membrane. It carries out the reaction a quinone + NADH + 5 H(+)(in) = a quinol + NAD(+) + 4 H(+)(out). NDH-1 shuttles electrons from NADH, via FMN and iron-sulfur (Fe-S) centers, to quinones in the respiratory chain. The immediate electron acceptor for the enzyme in this species is believed to be a menaquinone. Couples the redox reaction to proton translocation (for every two electrons transferred, four hydrogen ions are translocated across the cytoplasmic membrane), and thus conserves the redox energy in a proton gradient. In Bacillus mycoides (strain KBAB4) (Bacillus weihenstephanensis), this protein is NADH-quinone oxidoreductase subunit B.